Consider the following 252-residue polypeptide: Probable transcriptional regulatory protein Ava_1228 (252 aa).

Belongs to the TACO1 family.

It is found in the cytoplasm. The protein is Probable transcriptional regulatory protein Ava_1228 of Trichormus variabilis (strain ATCC 29413 / PCC 7937) (Anabaena variabilis).